Here is a 314-residue protein sequence, read N- to C-terminus: Homoserine O-acetyltransferase (314 aa).

Catalysis depends on Cys142, which acts as the Acyl-thioester intermediate. The substrate site is built by Lys163 and Ser192. His235 serves as the catalytic Proton acceptor. The active site involves Glu237. Substrate is bound at residue Arg249.

Belongs to the MetA family.

It is found in the cytoplasm. The enzyme catalyses L-homoserine + acetyl-CoA = O-acetyl-L-homoserine + CoA. Its pathway is amino-acid biosynthesis; L-methionine biosynthesis via de novo pathway; O-acetyl-L-homoserine from L-homoserine: step 1/1. Its function is as follows. Transfers an acetyl group from acetyl-CoA to L-homoserine, forming acetyl-L-homoserine. This is Homoserine O-acetyltransferase from Streptococcus pneumoniae (strain Taiwan19F-14).